A 426-amino-acid chain; its full sequence is MLDSKLVRTQLTEIAERLATRGFALDVARFEALESQRKSVQVRTEQLQAERNSRSKSIGQAKARGEDIAPLLAEVDQMGSDLEAGKRELDAIQNELDNLLLNIPNLPHESVPVGADEDGNVEVARWGTPRSFDFEIKDHVALGEQHGWLDFETAAKLSGARFALLRGPIARLHRALAQFMINLHTGEHGYEEAYTPYLVQAPALQGTGQLPKFEEDLFKIRREDQADLYLIPTAEVSLTNIVAGEILDAKQLPLKFVAHTPCFRSEAGASGRDTRGMIRQHQFDKVEMVQIVEPSKSFEALEGMTAHAERVLQLLELPYRKLALCTGDMGFSAVKTYDLEVWVPSQDKYREISSCSNCGDFQARRMQARYRNPETGKPELVHTLNGSGLAVGRTLVAVLENYQQADGSIRVPEVLKPYMGGIEVIG.

Residue 233-235 (TAE) coordinates L-serine. 264–266 (RSE) contributes to the ATP binding site. Residue Glu-287 participates in L-serine binding. 351 to 354 (EISS) is a binding site for ATP. An L-serine-binding site is contributed by Ser-387.

This sequence belongs to the class-II aminoacyl-tRNA synthetase family. Type-1 seryl-tRNA synthetase subfamily. As to quaternary structure, homodimer. The tRNA molecule binds across the dimer.

It localises to the cytoplasm. It carries out the reaction tRNA(Ser) + L-serine + ATP = L-seryl-tRNA(Ser) + AMP + diphosphate + H(+). The catalysed reaction is tRNA(Sec) + L-serine + ATP = L-seryl-tRNA(Sec) + AMP + diphosphate + H(+). It participates in aminoacyl-tRNA biosynthesis; selenocysteinyl-tRNA(Sec) biosynthesis; L-seryl-tRNA(Sec) from L-serine and tRNA(Sec): step 1/1. Its function is as follows. Catalyzes the attachment of serine to tRNA(Ser). Is also able to aminoacylate tRNA(Sec) with serine, to form the misacylated tRNA L-seryl-tRNA(Sec), which will be further converted into selenocysteinyl-tRNA(Sec). The protein is Serine--tRNA ligase of Ectopseudomonas mendocina (strain ymp) (Pseudomonas mendocina).